The following is a 142-amino-acid chain: Hemoglobin subunit alpha-2 (142 aa).

One can recognise a Globin domain in the interval 2-142; the sequence is VLSAADKTNV…VSTVLTSKYR (141 aa). His59 is a binding site for O2. Residue His88 participates in heme b binding.

This sequence belongs to the globin family. Heterotetramer of two alpha chains and two beta chains. Red blood cells.

Functionally, involved in oxygen transport from the lung to the various peripheral tissues. Its function is as follows. Hemopressin acts as an antagonist peptide of the cannabinoid receptor CNR1. Hemopressin-binding efficiently blocks cannabinoid receptor CNR1 and subsequent signaling. This chain is Hemoglobin subunit alpha-2 (HBA2), found in Equus quagga burchellii (Burchell's zebra).